A 353-amino-acid polypeptide reads, in one-letter code: Protein RecA (353 aa).

Residue 68-75 participates in ATP binding; it reads GPESSGKT.

This sequence belongs to the RecA family.

It localises to the cytoplasm. Functionally, can catalyze the hydrolysis of ATP in the presence of single-stranded DNA, the ATP-dependent uptake of single-stranded DNA by duplex DNA, and the ATP-dependent hybridization of homologous single-stranded DNAs. It interacts with LexA causing its activation and leading to its autocatalytic cleavage. The polypeptide is Protein RecA (Roseiflexus castenholzii (strain DSM 13941 / HLO8)).